The following is a 147-amino-acid chain: Ponticulin-like protein C4 (147 aa).

Positions 1-20 (MKFTKSLLLLIVAVFASSNA) are cleaved as a signal peptide. N118 carries GPI-like-anchor amidated asparagine lipidation. N118 is a glycosylation site (N-linked (GlcNAc...) asparagine). A propeptide spans 119-147 (SSESDSSDSTRIGASFALAAAALLSMIAL) (removed in mature form).

The protein belongs to the ponticulin family. In terms of processing, the GPI-like-anchor contains a phosphoceramide group, rather than a phosphatidyl group.

It is found in the cell membrane. This chain is Ponticulin-like protein C4 (ponC4), found in Dictyostelium discoideum (Social amoeba).